Here is a 450-residue protein sequence, read N- to C-terminus: Tubulin alpha chain (450 aa).

Gln11 lines the GTP pocket. Lys40 carries the N6-acetyllysine modification. Residues Glu71, Ser140, Gly144, Thr145, Thr179, Asn206, and Asn228 each contribute to the GTP site. Glu71 contacts Mg(2+). Residue Glu254 is part of the active site.

The protein belongs to the tubulin family. Dimer of alpha and beta chains. A typical microtubule is a hollow water-filled tube with an outer diameter of 25 nm and an inner diameter of 15 nM. Alpha-beta heterodimers associate head-to-tail to form protofilaments running lengthwise along the microtubule wall with the beta-tubulin subunit facing the microtubule plus end conferring a structural polarity. Microtubules usually have 13 protofilaments but different protofilament numbers can be found in some organisms and specialized cells. It depends on Mg(2+) as a cofactor. Post-translationally, acetylation of alpha chains at Lys-40 stabilizes microtubules and affects affinity and processivity of microtubule motors. This modification has a role in multiple cellular functions, ranging from cell motility, cell cycle progression or cell differentiation to intracellular trafficking and signaling.

The protein localises to the cytoplasm. It is found in the cytoskeleton. It carries out the reaction GTP + H2O = GDP + phosphate + H(+). Tubulin is the major constituent of microtubules, a cylinder consisting of laterally associated linear protofilaments composed of alpha- and beta-tubulin heterodimers. Microtubules grow by the addition of GTP-tubulin dimers to the microtubule end, where a stabilizing cap forms. Below the cap, tubulin dimers are in GDP-bound state, owing to GTPase activity of alpha-tubulin. The polypeptide is Tubulin alpha chain (Tyrophagus putrescentiae (Mold mite)).